We begin with the raw amino-acid sequence, 140 residues long: Hemoglobin subunit beta (140 aa).

The Globin domain occupies Gly1–His140. 2 residues coordinate heme b: His57 and His86.

The protein belongs to the globin family. In terms of assembly, heterotetramer of either two alpha-B chains or two alpha-C chains and two beta chains.

Its function is as follows. The beta chain is a component of adult hemoglobins B. And C. The protein is Hemoglobin subunit beta (HBB) of Aquarana catesbeiana (American bullfrog).